A 934-amino-acid polypeptide reads, in one-letter code: Progesterone receptor (934 aa).

Residues 1–49 (MTELKSKGPRAPHVAGGPPSPEVGSPLLCRPAAGPFQGSQTSDTLPEVS) are disordered. The tract at residues 1–164 (MTELKSKGPR…PATQRVLSPL (164 aa)) is AF3; mediates transcriptional activation. The tract at residues 1 to 567 (MTELKSKGPR…YSFESLPQKI (567 aa)) is modulating, Pro-Rich. The residue at position 20 (serine 20) is a Phosphoserine. The LXXL motif 1 motif lies at 55 to 59 (LDGLL). The interval 61–239 (PRLCQGQDPP…EDSAGPLLKG (179 aa)) is disordered. Serine 81 is modified (phosphoserine). The LXXL motif 2 motif lies at 115-119 (LDTLL). Residues serine 130 and serine 162 each carry the phosphoserine modification. The interval 165-305 (MSRSGGKTED…LATTMMDFIH (141 aa)) is mediates transcriptional transrepression. The short motif at 183-187 (KVLPR) is the Nuclear localization signal element. Serine 190 is modified (phosphoserine). The span at 191–203 (PSRQLLLPTSGSP) shows a compositional bias: polar residues. Serine 213 is subject to Phosphoserine. Residues 220 to 231 (EVEEEDGSESED) are compositionally biased toward acidic residues. Serine 294 bears the Phosphoserine; by MAPK1 mark. The tract at residues 331 to 375 (GGAGAASAFAPPQSSPSASSTPVAVGDFPDCAYPPDAEPKDNAYP) is disordered. A compositionally biased stretch (low complexity) spans 335–350 (AASAFAPPQSSPSASS). Residue serine 345 is modified to Phosphoserine; by MAPK. A Glycyl lysine isopeptide (Lys-Gly) (interchain with G-Cter in SUMO); alternate cross-link involves residue lysine 388. Lysine 388 participates in a covalent cross-link: Glycyl lysine isopeptide (Lys-Gly) (interchain with G-Cter in ubiquitin); alternate. Serine 400 is subject to Phosphoserine; by CDK2. Residues 415 to 454 (PDFPLGPPPQLPPRAPPSRPGEAAVTAAPASASVSSASSP) form a disordered region. Residues 418 to 433 (PLGPPPQLPPRAPPSR) are compositionally biased toward pro residues. Residues 434–454 (PGEAAVTAAPASASVSSASSP) are compositionally biased toward low complexity. The interval 456–547 (STLECILYKA…VYPPYLNYLR (92 aa)) is AF1; mediates transcriptional activation. Lysine 532 participates in a covalent cross-link: Glycyl lysine isopeptide (Lys-Gly) (interchain with G-Cter in SUMO). 2 NR C4-type zinc fingers span residues 568–588 (CLIC…CGSC) and 604–628 (CAGR…LRKC). The nuclear receptor DNA-binding region spans 568 to 640 (CLICGDEASG…AGMVLGGRKF (73 aa)). Position 677 is a phosphoserine (serine 677). Residues 680–914 (QDIQLIPPLI…EFPEMMSEVI (235 aa)) enclose the NR LBD domain. Residues 688–934 (LIKLLMSIEP…MVKPLLFHKK (247 aa)) form an AF2; mediates transcriptional activation region. Arginine 767 contributes to the progesterone binding site.

It belongs to the nuclear hormone receptor family. In terms of assembly, interacts with SMARD1 and UNC45A. Interacts with CUEDC2; the interaction promotes ubiquitination, decreases sumoylation, and represses transcriptional activity. Interacts with PIAS3; the interaction promotes sumoylation of PR in a hormone-dependent manner, inhibits DNA-binding, and alters nuclear export. Interacts with SP1; the interaction requires ligand-induced phosphorylation on Ser-345 by ERK1/2-MAPK. Interacts with PRMT2. Interacts with NCOA2 and NCOA1. Interacts with KLF9. Interacts with GTF2B. Post-translationally, phosphorylated on multiple serine sites. Several of these sites are hormone-dependent. Phosphorylation on Ser-294 is highly hormone-dependent and modulates ubiquitination and sumoylation on Lys-388. Phosphorylation on Ser-345 also requires induction by hormone. Basal phosphorylation on Ser-81, Ser-162, Ser-190 and Ser-400 is increased in response to progesterone and can be phosphorylated in vitro by the CDK2-A1 complex. Increased levels of phosphorylation on Ser-400 also in the presence of EGF, heregulin, IGF, PMA and FBS. Phosphorylation at this site by CDK2 is ligand-independent, and increases nuclear translocation and transcriptional activity. Phosphorylation at Ser-162 and Ser-294, but not at Ser-190, is impaired during the G(2)/M phase of the cell cycle. Phosphorylation on Ser-345 by ERK1/2 MAPK is required for interaction with SP1. In terms of processing, sumoylation is hormone-dependent and represses transcriptional activity. Sumoylation on all three sites is enhanced by PIAS3. Desumoylated by SENP1. Sumoylation on Lys-388, the main site of sumoylation, is repressed by ubiquitination on the same site, and modulated by phosphorylation at Ser-294. Ubiquitination is hormone-dependent and represses sumoylation on the same site. Promoted by MAPK-mediated phosphorylation on Ser-294. Ubiquitinated by UBR5, leading to its degradation: UBR5 specifically recognizes and binds ligand-bound PGR when it is not associated with coactivators (NCOAs). In presence of NCOAs, the UBR5-degron is not accessible, preventing its ubiquitination and degradation. Post-translationally, palmitoylated by ZDHHC7 and ZDHHC21. Palmitoylation is required for plasma membrane targeting and for rapid intracellular signaling via ERK and AKT kinases and cAMP generation.

It localises to the nucleus. The protein resides in the cytoplasm. The steroid hormones and their receptors are involved in the regulation of eukaryotic gene expression and affect cellular proliferation and differentiation in target tissues. Transcriptional activator of several progesteron-dependent promoters in a variety of cell types. Involved in activation of SRC-dependent MAPK signaling on hormone stimulation. The protein is Progesterone receptor (PGR) of Colobus guereza (Mantled guereza).